Reading from the N-terminus, the 384-residue chain is Prokineticin receptor 2 (384 aa).

The Extracellular portion of the chain corresponds to 1–53; that stretch reads MAAQNGNASFPANFSIPQEHASSLPFNFSYDDYDLPLDEDEDMTKTQTFFAAK. N-linked (GlcNAc...) asparagine glycosylation is found at Asn7, Asn13, and Asn27. Residues 54-74 traverse the membrane as a helical segment; the sequence is IVIGVALVGIMLTCGIGNFVF. Residues 75-89 are Cytoplasmic-facing; it reads ITALTRYKKLRNLTN. The helical transmembrane segment at 90–110 threads the bilayer; the sequence is LLIANLAISDFLVAIICCPFE. The Extracellular segment spans residues 111–137; that stretch reads MDYYVVHQLSWEHGHVLCACINYLRTV. The cysteines at positions 128 and 208 are disulfide-linked. A helical transmembrane segment spans residues 138–158; that stretch reads SLYVSTNALLAIAIDRYLAIV. Over 159 to 171 the chain is Cytoplasmic; that stretch reads HPLKPRMNYQTAS. Residues 172 to 192 form a helical membrane-spanning segment; the sequence is FLIALVWMVSILISIPSAYFT. The Extracellular portion of the chain corresponds to 193-223; sequence KETVLFIVKNQKKIFCGQVWPVDQQLYYKSY. The chain crosses the membrane as a helical span at residues 224–244; the sequence is FLFVFGIEFLGPVFTMTLCYA. Residues 245–273 lie on the Cytoplasmic side of the membrane; sequence RISRELWFKAVPGFQTEQIRKRLRCRRKT. Residues 274 to 294 traverse the membrane as a helical segment; sequence VLVLMCILTAYVLCWAPFYGF. Residues 295–313 are Extracellular-facing; it reads TIVRDFFPTVFVKEKHYLT. A helical membrane pass occupies residues 314 to 334; sequence AFYVVECIAMSNSMINTVCFV. Topologically, residues 335–384 are cytoplasmic; sequence TVKNSTMKYFKKMLLLHWRPSHHGSKSSADLDLKTSRLPATEEVDCIRLK.

Belongs to the G-protein coupled receptor 1 family. As to quaternary structure, homodimer.

The protein localises to the cell membrane. Its function is as follows. Receptor for prokineticin 2. Exclusively coupled to the G(q) subclass of heteromeric G proteins. Activation leads to mobilization of calcium, stimulation of phosphoinositide turnover and activation of p44/p42 mitogen-activated protein kinase. The protein is Prokineticin receptor 2 (PROKR2) of Bos taurus (Bovine).